Reading from the N-terminus, the 197-residue chain is CASP-like protein 1B2 (197 aa).

Position 2 is an N-acetylalanine (Ala2). The Cytoplasmic segment spans residues 2-17 (AREKIVVAGGTTKSWK). The helical transmembrane segment at 18–38 (LLLGLRIFAFMATLAAAIVMS) threads the bilayer. Over 39 to 69 (LNKETKTLVVATIGTVPIKATLTAKFQHTPA) the chain is Extracellular. A helical membrane pass occupies residues 70–90 (FVFFVIANVMVSFHNLLMIVV). Residues 91–106 (QIFSRKLEYKGLRLLS) are Cytoplasmic-facing. The chain crosses the membrane as a helical span at residues 107-127 (IAILDMLNATLVSAAANAAVF). Residues 128–156 (VAELGKNGNKHAKWNKVCDRFTTYCDHGA) are Extracellular-facing. Residues 157-177 (GAIIAAFAGVILMLLVSAVSI) traverse the membrane as a helical segment. Residues 178–197 (SRLLINSKNFSTTATTTSVV) lie on the Cytoplasmic side of the membrane.

Belongs to the Casparian strip membrane proteins (CASP) family. Homodimer and heterodimers.

The protein localises to the cell membrane. The chain is CASP-like protein 1B2 from Arabidopsis thaliana (Mouse-ear cress).